A 106-amino-acid chain; its full sequence is Biogenesis of lysosome-related organelles complex 1 subunit 6 (106 aa).

A disordered region spans residues 78–106 (KKTSQLELSDTNIEDGSTTSTPTTTNKSQ). Positions 82-93 (QLELSDTNIEDG) are enriched in polar residues. The segment covering 94 to 106 (STTSTPTTTNKSQ) has biased composition (low complexity).

This sequence belongs to the BLOC1S6 family. Homodimer (isoform 1). Component of the biogenesis of lysosome-related organelles complex-1 (BLOC-1) composed at least of blos-1, blos-2, blos-4, dsbn-1, glo-2, mutd-1 and snpn-1. Isoform 1 interacts with blos-1 and blos-4.

It is found in the cytoplasm. The protein resides in the endosome. Component of the biogenesis of lysosome-related organelles complex-1 (BLOC-1) involved in gut granule biogenesis. The protein is Biogenesis of lysosome-related organelles complex 1 subunit 6 (glo-2) of Caenorhabditis elegans.